The primary structure comprises 490 residues: Inosine-5'-monophosphate dehydrogenase (490 aa).

CBS domains follow at residues 96-154 (MIIN…SKPV) and 158-218 (MTKE…CKDE). NAD(+) is bound by residues Asp252 and 302 to 304 (GVG). Gly304 and Gly306 together coordinate K(+). An IMP-binding site is contributed by Ser307. A K(+)-binding site is contributed by Cys309. The active-site Thioimidate intermediate is the Cys309. IMP-binding positions include 342 to 344 (DGG), 365 to 366 (GN), and 389 to 393 (YRGMG). The Proton acceptor role is filled by Arg406. Glu418 is a binding site for IMP. K(+) is bound by residues Glu472, Ser473, and His474.

This sequence belongs to the IMPDH/GMPR family. In terms of assembly, homotetramer. It depends on K(+) as a cofactor.

It catalyses the reaction IMP + NAD(+) + H2O = XMP + NADH + H(+). It participates in purine metabolism; XMP biosynthesis via de novo pathway; XMP from IMP: step 1/1. Its activity is regulated as follows. Mycophenolic acid (MPA) is a non-competitive inhibitor that prevents formation of the closed enzyme conformation by binding to the same site as the amobile flap. In contrast, mizoribine monophosphate (MZP) is a competitive inhibitor that induces the closed conformation. MPA is a potent inhibitor of mammalian IMPDHs but a poor inhibitor of the bacterial enzymes. MZP is a more potent inhibitor of bacterial IMPDH. In terms of biological role, catalyzes the conversion of inosine 5'-phosphate (IMP) to xanthosine 5'-phosphate (XMP), the first committed and rate-limiting step in the de novo synthesis of guanine nucleotides, and therefore plays an important role in the regulation of cell growth. In Aquifex aeolicus (strain VF5), this protein is Inosine-5'-monophosphate dehydrogenase.